Here is a 108-residue protein sequence, read N- to C-terminus: Probable 4-amino-4-deoxy-L-arabinose-phosphoundecaprenol flippase subunit ArnE (108 aa).

3 helical membrane passes run 32-52 (PLLLWLGGSVLLLGMAMLVWL), 58-78 (VPVGVAYPMLSLNFIFVTLAA), and 85-105 (TLSLRHALGVILIVAGVAIMG). The EamA domain occupies 34–106 (LLWLGGSVLL…IVAGVAIMGS (73 aa)).

This sequence belongs to the ArnE family. Heterodimer of ArnE and ArnF.

It is found in the cell inner membrane. It functions in the pathway bacterial outer membrane biogenesis; lipopolysaccharide biosynthesis. Its function is as follows. Translocates 4-amino-4-deoxy-L-arabinose-phosphoundecaprenol (alpha-L-Ara4N-phosphoundecaprenol) from the cytoplasmic to the periplasmic side of the inner membrane. This chain is Probable 4-amino-4-deoxy-L-arabinose-phosphoundecaprenol flippase subunit ArnE, found in Erwinia tasmaniensis (strain DSM 17950 / CFBP 7177 / CIP 109463 / NCPPB 4357 / Et1/99).